A 445-amino-acid chain; its full sequence is N-succinylarginine dihydrolase (445 aa).

Substrate is bound by residues 19 to 28 (AGLSYGNVAS), Asn-110, and 137 to 138 (HR). Glu-174 is an active-site residue. Arg-214 is a substrate binding site. Residue His-250 is part of the active site. Substrate is bound by residues Asp-252 and Asn-363. The Nucleophile role is filled by Cys-369.

It belongs to the succinylarginine dihydrolase family. Homodimer.

The catalysed reaction is N(2)-succinyl-L-arginine + 2 H2O + 2 H(+) = N(2)-succinyl-L-ornithine + 2 NH4(+) + CO2. Its pathway is amino-acid degradation; L-arginine degradation via AST pathway; L-glutamate and succinate from L-arginine: step 2/5. Functionally, catalyzes the hydrolysis of N(2)-succinylarginine into N(2)-succinylornithine, ammonia and CO(2). In Aeromonas hydrophila subsp. hydrophila (strain ATCC 7966 / DSM 30187 / BCRC 13018 / CCUG 14551 / JCM 1027 / KCTC 2358 / NCIMB 9240 / NCTC 8049), this protein is N-succinylarginine dihydrolase.